A 326-amino-acid polypeptide reads, in one-letter code: Phospho-N-acetylmuramoyl-pentapeptide-transferase (326 aa).

The next 10 membrane-spanning stretches (helical) occupy residues 5 to 25 (GLLITIVVAFLITVLLSPIFI), 51 to 71 (TPTMGGLMIIFSIIITSLIMA), 82 to 102 (VWLLIFVLFGYGLLGFLDDFI), 122 to 142 (IIIALVFYFILRNQGFSTVIY), 148 to 168 (LQFDIGWFYAVLVIFMMVGAS), 180 to 200 (LLAGTAAIAFGAFAIIAWYGI), 204 to 224 (VVAVFSLAVVGALLGFLVFNA), 229 to 249 (VFMGDTGSLALGGAIAAISIL), 252 to 272 (LEILLIIIGGVFVIETLSVII), and 304 to 324 (VVTTFWLVGLLFAMLGVYIEV).

The protein belongs to the glycosyltransferase 4 family. MraY subfamily. Mg(2+) is required as a cofactor.

The protein localises to the cell membrane. The catalysed reaction is UDP-N-acetyl-alpha-D-muramoyl-L-alanyl-gamma-D-glutamyl-meso-2,6-diaminopimeloyl-D-alanyl-D-alanine + di-trans,octa-cis-undecaprenyl phosphate = di-trans,octa-cis-undecaprenyl diphospho-N-acetyl-alpha-D-muramoyl-L-alanyl-D-glutamyl-meso-2,6-diaminopimeloyl-D-alanyl-D-alanine + UMP. The protein operates within cell wall biogenesis; peptidoglycan biosynthesis. Its function is as follows. Catalyzes the initial step of the lipid cycle reactions in the biosynthesis of the cell wall peptidoglycan: transfers peptidoglycan precursor phospho-MurNAc-pentapeptide from UDP-MurNAc-pentapeptide onto the lipid carrier undecaprenyl phosphate, yielding undecaprenyl-pyrophosphoryl-MurNAc-pentapeptide, known as lipid I. In Oceanobacillus iheyensis (strain DSM 14371 / CIP 107618 / JCM 11309 / KCTC 3954 / HTE831), this protein is Phospho-N-acetylmuramoyl-pentapeptide-transferase.